The following is a 176-amino-acid chain: ATP synthase subunit delta (176 aa).

It belongs to the ATPase delta chain family. As to quaternary structure, F-type ATPases have 2 components, F(1) - the catalytic core - and F(0) - the membrane proton channel. F(1) has five subunits: alpha(3), beta(3), gamma(1), delta(1), epsilon(1). F(0) has three main subunits: a(1), b(2) and c(10-14). The alpha and beta chains form an alternating ring which encloses part of the gamma chain. F(1) is attached to F(0) by a central stalk formed by the gamma and epsilon chains, while a peripheral stalk is formed by the delta and b chains.

The protein resides in the cell inner membrane. In terms of biological role, f(1)F(0) ATP synthase produces ATP from ADP in the presence of a proton or sodium gradient. F-type ATPases consist of two structural domains, F(1) containing the extramembraneous catalytic core and F(0) containing the membrane proton channel, linked together by a central stalk and a peripheral stalk. During catalysis, ATP synthesis in the catalytic domain of F(1) is coupled via a rotary mechanism of the central stalk subunits to proton translocation. This protein is part of the stalk that links CF(0) to CF(1). It either transmits conformational changes from CF(0) to CF(1) or is implicated in proton conduction. This Polaromonas sp. (strain JS666 / ATCC BAA-500) protein is ATP synthase subunit delta.